A 700-amino-acid chain; its full sequence is Methionine--tRNA ligase (700 aa).

The 'HIGH' region signature appears at 13-23 (PYANGDIHLGH). The Zn(2+) site is built by Cys144, Cys147, Cys157, and Cys160. The 'KMSKS' region signature appears at 341–345 (KMSKS). Lys344 contacts ATP. A disordered region spans residues 562-587 (QVGAPTASQDDKAAAKNTSPAAMPSS). A compositionally biased stretch (polar residues) spans 577–587 (KNTSPAAMPSS). Residues 598–700 (DFAKVEMKVA…DEAVIGDSLA (103 aa)) form the tRNA-binding domain.

Belongs to the class-I aminoacyl-tRNA synthetase family. MetG type 1 subfamily. In terms of assembly, homodimer. Zn(2+) is required as a cofactor.

The protein localises to the cytoplasm. The enzyme catalyses tRNA(Met) + L-methionine + ATP = L-methionyl-tRNA(Met) + AMP + diphosphate. Is required not only for elongation of protein synthesis but also for the initiation of all mRNA translation through initiator tRNA(fMet) aminoacylation. This Psychrobacter cryohalolentis (strain ATCC BAA-1226 / DSM 17306 / VKM B-2378 / K5) protein is Methionine--tRNA ligase.